We begin with the raw amino-acid sequence, 150 residues long: Globin-1 (150 aa).

The Globin domain maps to 11 to 150; sequence PLSDAEKNKI…MICILLSSAY (140 aa). Heme b contacts are provided by His74 and His106.

This sequence belongs to the globin family. As to quaternary structure, monomer.

The protein is Globin-1 of Mordacia mordax (Southern hemisphere lamprey).